The primary structure comprises 415 residues: Dynein assembly factor with WD repeat domains 1 (415 aa).

WD repeat units follow at residues 90–129 (AHILPLTNVALNKSGSCFITGSYDRTCKLWDTASGEELNT), 132–174 (GHRN…HTFR), 175–214 (GHTAEIVCLSFNPQSTLVATGSMDTTAKLWDIQNGEEVYT), 217–256 (GHSAEIISLSFNTSGDRIITGSFDHTVVVWDADTGRKVNI), 259–298 (GHCAEISSASFNWDCSLILTGSMDKTCKLWDATNGKCVAT), 301–340 (GHDDEILDSCFDYTGKLIATASADGTARIFSAATRKCIAK), 343–384 (GHEG…QVLE), and 386–415 (HTDEIFSCAFNYKGNIVITGSKDNTCRIWR).

Belongs to the WD repeat WDR69 family. Interacts with IFT46.

The protein resides in the cytoplasm. The protein localises to the cytoskeleton. Its subcellular location is the flagellum basal body. It localises to the flagellum axoneme. Its function is as follows. Required for axonemal dynein assembly and ciliary motility in ciliated organs, including Kupffer's vesicle, during embryogenesis. Facilitates the onset of robust cilia motility during development. The chain is Dynein assembly factor with WD repeat domains 1 from Homo sapiens (Human).